We begin with the raw amino-acid sequence, 191 residues long: ATP synthase subunit delta (191 aa).

This sequence belongs to the ATPase delta chain family. As to quaternary structure, F-type ATPases have 2 components, F(1) - the catalytic core - and F(0) - the membrane proton channel. F(1) has five subunits: alpha(3), beta(3), gamma(1), delta(1), epsilon(1). F(0) has three main subunits: a(1), b(2) and c(10-14). The alpha and beta chains form an alternating ring which encloses part of the gamma chain. F(1) is attached to F(0) by a central stalk formed by the gamma and epsilon chains, while a peripheral stalk is formed by the delta and b chains.

The protein resides in the cell inner membrane. F(1)F(0) ATP synthase produces ATP from ADP in the presence of a proton or sodium gradient. F-type ATPases consist of two structural domains, F(1) containing the extramembraneous catalytic core and F(0) containing the membrane proton channel, linked together by a central stalk and a peripheral stalk. During catalysis, ATP synthesis in the catalytic domain of F(1) is coupled via a rotary mechanism of the central stalk subunits to proton translocation. In terms of biological role, this protein is part of the stalk that links CF(0) to CF(1). It either transmits conformational changes from CF(0) to CF(1) or is implicated in proton conduction. In Halothermothrix orenii (strain H 168 / OCM 544 / DSM 9562), this protein is ATP synthase subunit delta.